The chain runs to 489 residues: UDP-N-acetylmuramoylalanine--D-glutamate ligase (489 aa).

Residue 126–132 (GTNGKTT) coordinates ATP.

Belongs to the MurCDEF family.

Its subcellular location is the cytoplasm. It catalyses the reaction UDP-N-acetyl-alpha-D-muramoyl-L-alanine + D-glutamate + ATP = UDP-N-acetyl-alpha-D-muramoyl-L-alanyl-D-glutamate + ADP + phosphate + H(+). Its pathway is cell wall biogenesis; peptidoglycan biosynthesis. Cell wall formation. Catalyzes the addition of glutamate to the nucleotide precursor UDP-N-acetylmuramoyl-L-alanine (UMA). In Mycobacterium avium (strain 104), this protein is UDP-N-acetylmuramoylalanine--D-glutamate ligase.